A 376-amino-acid polypeptide reads, in one-letter code: Methionine import ATP-binding protein MetN 1 (376 aa).

Residues 34–273 (VRFINLGKTY…PQHEVSKTLL (240 aa)) enclose the ABC transporter domain. 70 to 77 (GRSGAGKS) lines the ATP pocket.

It belongs to the ABC transporter superfamily. Methionine importer (TC 3.A.1.24) family. In terms of assembly, the complex is composed of two ATP-binding proteins (MetN), two transmembrane proteins (MetI) and a solute-binding protein (MetQ).

The protein resides in the cell inner membrane. The catalysed reaction is L-methionine(out) + ATP + H2O = L-methionine(in) + ADP + phosphate + H(+). The enzyme catalyses D-methionine(out) + ATP + H2O = D-methionine(in) + ADP + phosphate + H(+). Its function is as follows. Part of the ABC transporter complex MetNIQ involved in methionine import. Responsible for energy coupling to the transport system. The protein is Methionine import ATP-binding protein MetN 1 of Pseudomonas syringae pv. tomato (strain ATCC BAA-871 / DC3000).